A 44-amino-acid chain; its full sequence is Photosystem I reaction center subunit IX (44 aa).

The chain crosses the membrane as a helical span at residues F9 to I29.

This sequence belongs to the PsaJ family.

It is found in the cellular thylakoid membrane. Functionally, may help in the organization of the PsaE and PsaF subunits. This is Photosystem I reaction center subunit IX from Prochlorococcus marinus subsp. pastoris (strain CCMP1986 / NIES-2087 / MED4).